The chain runs to 197 residues: RING-H2 finger protein ATL80 (197 aa).

A helical transmembrane segment spans residues 30–50 (LVVILAALLCALICVLGLIAV). The segment at 111–153 (CAICLAEFSAGDELRVLPQCGHGFHVACIDTWLGSHSSCPSCR) adopts an RING-type; atypical zinc-finger fold. A disordered region spans residues 168–197 (PGSSSSGLESEPEIEIRIKQGEDDPNSFLP).

It belongs to the RING-type zinc finger family. ATL subfamily.

The protein localises to the membrane. The enzyme catalyses S-ubiquitinyl-[E2 ubiquitin-conjugating enzyme]-L-cysteine + [acceptor protein]-L-lysine = [E2 ubiquitin-conjugating enzyme]-L-cysteine + N(6)-ubiquitinyl-[acceptor protein]-L-lysine.. Its pathway is protein modification; protein ubiquitination. Functionally, may be involved in the early steps of the plant defense signaling pathway. This chain is RING-H2 finger protein ATL80 (ATL80), found in Arabidopsis thaliana (Mouse-ear cress).